The primary structure comprises 506 residues: ATP synthase subunit alpha (506 aa).

171 to 178 (GDRKTGKT) is a binding site for ATP.

The protein belongs to the ATPase alpha/beta chains family. In terms of assembly, F-type ATPases have 2 components, CF(1) - the catalytic core - and CF(0) - the membrane proton channel. CF(1) has five subunits: alpha(3), beta(3), gamma(1), delta(1), epsilon(1). CF(0) has three main subunits: a(1), b(2) and c(9-12). The alpha and beta chains form an alternating ring which encloses part of the gamma chain. CF(1) is attached to CF(0) by a central stalk formed by the gamma and epsilon chains, while a peripheral stalk is formed by the delta and b chains.

The protein localises to the cell inner membrane. It catalyses the reaction ATP + H2O + 4 H(+)(in) = ADP + phosphate + 5 H(+)(out). Functionally, produces ATP from ADP in the presence of a proton gradient across the membrane. The alpha chain is a regulatory subunit. The protein is ATP synthase subunit alpha of Anaplasma phagocytophilum (strain HZ).